We begin with the raw amino-acid sequence, 563 residues long: Adenine deaminase (563 aa).

It belongs to the metallo-dependent hydrolases superfamily. Adenine deaminase family. Mn(2+) is required as a cofactor.

It carries out the reaction adenine + H2O + H(+) = hypoxanthine + NH4(+). This Lactiplantibacillus plantarum (strain ATCC BAA-793 / NCIMB 8826 / WCFS1) (Lactobacillus plantarum) protein is Adenine deaminase.